The chain runs to 815 residues: Patatin-like phospholipase domain-containing protein LELG_00944 (815 aa).

Residues 41-50 (VSTTAPTTPL) are compositionally biased toward polar residues. 2 disordered regions span residues 41–105 (VSTT…PQLK) and 140–166 (SENL…STSP). A compositionally biased stretch (low complexity) spans 54 to 73 (LDMGDLSLLGGELGNGSDDV). Acidic residues predominate over residues 74 to 94 (VVGDDDDDDDDDDDDDDDDDD). Basic residues predominate over residues 148-160 (KRTKFAKSSKSSK). The chain crosses the membrane as a helical span at residues 185–205 (WPILTFVVIWVTILGFLYLAV). Residues 360 to 552 (LCLSGGACFA…RTDIPIDALN (193 aa)) enclose the PNPLA domain. Positions 391–395 (GTSGG) match the GXSXG motif. Catalysis depends on Ser-393, which acts as the Nucleophile. Asp-539 serves as the catalytic Proton acceptor. Residues 753–815 (GSTLRDDDAD…LTKERRHTVY (63 aa)) are disordered. A compositionally biased stretch (acidic residues) spans 759–799 (DDADADVDEDDNEDEDEEDEDENDYEEYDVEDLDDPYESDA).

This sequence belongs to the PLPL family.

The protein resides in the membrane. Functionally, probable lipid hydrolase. This Lodderomyces elongisporus (strain ATCC 11503 / CBS 2605 / JCM 1781 / NBRC 1676 / NRRL YB-4239) (Yeast) protein is Patatin-like phospholipase domain-containing protein LELG_00944.